Here is a 102-residue protein sequence, read N- to C-terminus: Small ribosomal subunit protein uS10 (102 aa).

This sequence belongs to the universal ribosomal protein uS10 family. In terms of assembly, part of the 30S ribosomal subunit.

Involved in the binding of tRNA to the ribosomes. The chain is Small ribosomal subunit protein uS10 from Pediococcus pentosaceus (strain ATCC 25745 / CCUG 21536 / LMG 10740 / 183-1w).